The following is a 206-amino-acid chain: MPSLLITVLFLNVIIYVINTVGAATVDGLLWLLYIKLPTGTSQIAREQRHMKREVVQLKHEMSSTSSQDEFAKWAKLRRRHDKAMEAYEAKNNELTQSKSTFDMTIKIARWAATSGLMLFLQFWYSKTPIFTLPPGWIPWQVQWVLSFPRAPMGTVSIQIWGGACATVVALVGDAMRASLAYVSKPKIDRIKLGATMEGKEGKKRQ.

The Lumenal portion of the chain corresponds to 1–4 (MPSL). A helical membrane pass occupies residues 5–24 (LITVLFLNVIIYVINTVGAA). The Cytoplasmic segment spans residues 25-110 (TVDGLLWLLY…TFDMTIKIAR (86 aa)). Residues 75-100 (AKLRRRHDKAMEAYEAKNNELTQSKS) adopt a coiled-coil conformation. A helical membrane pass occupies residues 111 to 131 (WAATSGLMLFLQFWYSKTPIF). Topologically, residues 132–155 (TLPPGWIPWQVQWVLSFPRAPMGT) are lumenal. Residues 156–172 (VSIQIWGGACATVVALV) traverse the membrane as a helical segment. Residues 173–206 (GDAMRASLAYVSKPKIDRIKLGATMEGKEGKKRQ) are Cytoplasmic-facing.

The protein belongs to the WRB/GET1 family. In terms of assembly, interacts with GET3.

It is found in the endoplasmic reticulum membrane. Functionally, required for the post-translational delivery of tail-anchored (TA) proteins to the endoplasmic reticulum. Acts as a membrane receptor for soluble GET3, which recognizes and selectively binds the transmembrane domain of TA proteins in the cytosol. This chain is Protein GET1, found in Ajellomyces capsulatus (strain NAm1 / WU24) (Darling's disease fungus).